Here is a 965-residue protein sequence, read N- to C-terminus: MALLCGLGQVTLRIWVSLPSQSENGIGFLAARAFLRSGGMEALTTQLGPGREGSSSPNSKQELQPYSGSSALKPNQVGETSLYGVPIVSLVIDGQERLCLAQISNTLLKNYSYNEIHNRRVALGITCVQCTPVQLEILRRAGAMPISSRRCGMITKREAERLCKSFLGEHKPPKLPENFAFDVVHECAWGSRGSFIPARYNSSRAKCIKCGYCSMYFSPNKFIFHSHRTPDAKYTQPDAANFNSWRRHLKLSDKSATDELSHAWEDVKAMFNGGTRKRTFSLQGGGGGGANGGSGGQGKGGAGGGGGGGPGCGAEMAPGPPPHKSLRCGEDEAAGPPGPPPPHPQRGLGLATGASGPAGPGGPGGGAGVRSYPVIPVPSKGFGLLQKLPPPLFPHPYGFPTAFGLCPKKDDPVLGAGEPKGGPGTGSGGGGAGTGGGAGGPGASHLPPGAGAGPGGGAMFWGHQPSGAAKDAAAVAAAAAAATVYPTFPMFWPAAGSLPVPSYPAAQSQAKAVAAAVAAAAAAAAAAAGSGAPEPLDGAEPAKESGLGAEERCPSALSRGPLDEDGTDEALPPPLAPLPPPPPPPARKGSYVSAFRPVVKDTESIAKLYGSAREAYGAGPARGPGPGAGSGGYVSPDFLSEGSSSYNSASPDVDTADEPEVDVESNRFPDDEDAQEETEPSAPSAGGGPDGEQPTGPPSATSSGADGPANSPDGGSPRPRRRLGPPPAGRPAFGDLAAEDLVRRPERSPPSGGGGYELREPCGPLGGPAPAKVFAPERDEHVKSAAVALGPAASYVCTPEAHEPDKEDNHSPADDLETRKSYPDQRSISQPSPANTDRGEDGLTLDVTGTHLVEKDIENLAREELQKLLLEQMELRKKLEREFQSLKDNFQDQMKRELAYREEMVQQLQIVRDTLCNELDQERKARYAIQQKLKEAHDALHHFSCKMLTPRHCTGNCSFKPPLLP.

6 disordered regions span residues 45–72 (TQLG…SSAL), 278–367 (RTFS…GGGA), 410–458 (DDPV…GGGA), 530–592 (SGAP…GSYV), 615–777 (AYGA…FAPE), and 796–843 (VCTP…EDGL). 3 stretches are compositionally biased toward gly residues: residues 283–312 (QGGG…GPGC), 356–367 (GPAGPGGPGGGA), and 418–442 (EPKG…GGPG). The span at 571–586 (LPPPLAPLPPPPPPPA) shows a compositional bias: pro residues. The span at 620–632 (PARGPGPGAGSGG) shows a compositional bias: gly residues. Over residues 641–650 (EGSSSYNSAS) the composition is skewed to polar residues. Acidic residues-rich tracts occupy residues 654–663 (DTADEPEVDV) and 670–679 (DDEDAQEETE). A compositionally biased stretch (basic and acidic residues) spans 800–823 (EAHEPDKEDNHSPADDLETRKSYP). Positions 824–835 (DQRSISQPSPAN) are enriched in polar residues. A coiled-coil region spans residues 858 to 922 (ENLAREELQK…DTLCNELDQE (65 aa)).

Belongs to the SKI family. As to quaternary structure, interacts with LBX1. Interacts with SMAD1, SMAD2 and SMAD3. As to expression, present specifically in cerebellar Purkinje cells (at protein level).

The protein localises to the nucleus. Acts as a transcriptional corepressor of LBX1. Inhibits BMP signaling. The chain is SKI family transcriptional corepressor 1 (SKOR1) from Homo sapiens (Human).